The following is a 626-amino-acid chain: Phosphomethylpyrimidine synthase (626 aa).

The disordered stretch occupies residues 1-27 (MSKQEKAISLSESAQVDQQSVQPLPNS). The span at 10 to 25 (LSESAQVDQQSVQPLP) shows a compositional bias: polar residues. Substrate-binding positions include Asn232, Met261, Tyr290, His326, 346–348 (SRG), 387–390 (DGLR), and Glu426. His430 contributes to the Zn(2+) binding site. Position 453 (Tyr453) interacts with substrate. His494 serves as a coordination point for Zn(2+). Residues Cys574, Cys577, and Cys582 each contribute to the [4Fe-4S] cluster site.

It belongs to the ThiC family. Homodimer. The cofactor is [4Fe-4S] cluster.

It catalyses the reaction 5-amino-1-(5-phospho-beta-D-ribosyl)imidazole + S-adenosyl-L-methionine = 4-amino-2-methyl-5-(phosphooxymethyl)pyrimidine + CO + 5'-deoxyadenosine + formate + L-methionine + 3 H(+). It functions in the pathway cofactor biosynthesis; thiamine diphosphate biosynthesis. Catalyzes the synthesis of the hydroxymethylpyrimidine phosphate (HMP-P) moiety of thiamine from aminoimidazole ribotide (AIR) in a radical S-adenosyl-L-methionine (SAM)-dependent reaction. This is Phosphomethylpyrimidine synthase from Pseudomonas entomophila (strain L48).